Reading from the N-terminus, the 299-residue chain is Tyrosine recombinase XerD (299 aa).

Positions 3-88 (QQDNPLIEQF…AMRRLFQYLY (86 aa)) constitute a Core-binding (CB) domain. Residues 109 to 293 (RLPKDLSEAQ…ATERLRQLHQ (185 aa)) form the Tyr recombinase domain. Catalysis depends on residues R149, K173, H245, R248, and H271. Residue Y280 is the O-(3'-phospho-DNA)-tyrosine intermediate of the active site.

It belongs to the 'phage' integrase family. XerD subfamily. In terms of assembly, forms a cyclic heterotetrameric complex composed of two molecules of XerC and two molecules of XerD, in which XerC interacts with XerD via its C-terminal region, XerD interacts with XerC via its C-terminal region and so on.

The protein localises to the cytoplasm. With respect to regulation, ftsK may regulate the catalytic switch between XerC and XerD in the heterotetrameric complex during the two steps of the recombination process. Functionally, site-specific tyrosine recombinase, which acts by catalyzing the cutting and rejoining of the recombining DNA molecules. Binds cooperatively to specific DNA consensus sequences that are separated from XerC binding sites by a short central region, forming the heterotetrameric XerC-XerD complex that recombines DNA substrates. The complex is essential to convert dimers of the bacterial chromosome into monomers to permit their segregation at cell division. It also contributes to the segregational stability of plasmids. In the complex XerD specifically exchanges the bottom DNA strands. This chain is Tyrosine recombinase XerD, found in Yersinia pestis.